Here is a 511-residue protein sequence, read N- to C-terminus: Archaeal glutamate synthase [NADPH] (511 aa).

2 consecutive 4Fe-4S ferredoxin-type domains span residues 15-44 (FMIE…YDEE) and 46-75 (DMMR…VKPH). 8 residues coordinate [4Fe-4S] cluster: Cys24, Cys27, Cys30, Cys34, Cys55, Cys58, Cys61, and Cys65.

The protein belongs to the glutamate synthase family. It depends on FMN as a cofactor.

It carries out the reaction 2 L-glutamate + NADP(+) = L-glutamine + 2-oxoglutarate + NADPH + H(+). This chain is Archaeal glutamate synthase [NADPH], found in Archaeoglobus fulgidus (strain ATCC 49558 / DSM 4304 / JCM 9628 / NBRC 100126 / VC-16).